Consider the following 295-residue polypeptide: Protoheme IX farnesyltransferase (295 aa).

The next 9 membrane-spanning stretches (helical) occupy residues 30–50 (LVVLTGVTGIIIAPGNIHPLI), 51–71 (AVISTLCIALGSGAAGAINMW), 93–115 (ISRSSALEVGLVLSFISVTIMMI), 119–136 (YISGILLAISIGFYIYVY), 148–168 (IVIGGAAGALPPIIGWTSVTG), 175–195 (LVLFLIIFMWTPPHFWALSLL), 219–239 (IHILVYSILLFPITLLPGLFL), 244–264 (LYEITAIPLGLMFVVQAFQVF), and 275–295 (MFTYSIIYLFILFTCIMLSSF).

This sequence belongs to the UbiA prenyltransferase family. Protoheme IX farnesyltransferase subfamily.

It is found in the cell inner membrane. The catalysed reaction is heme b + (2E,6E)-farnesyl diphosphate + H2O = Fe(II)-heme o + diphosphate. Its pathway is porphyrin-containing compound metabolism; heme O biosynthesis; heme O from protoheme: step 1/1. Functionally, converts heme B (protoheme IX) to heme O by substitution of the vinyl group on carbon 2 of heme B porphyrin ring with a hydroxyethyl farnesyl side group. This chain is Protoheme IX farnesyltransferase, found in Ehrlichia ruminantium (strain Gardel).